The following is a 760-amino-acid chain: BMP/retinoic acid-inducible neural-specific protein 1 (760 aa).

An N-terminal signal peptide occupies residues 1-16 (MNWRFVELLYFLFVWG). The 184-residue stretch at 68–251 (RYKIYREFAR…FVQSALSYIM (184 aa)) folds into the MACPF domain. 7 N-linked (GlcNAc...) asparagine glycosylation sites follow: Asn-156, Asn-433, Asn-443, Asn-553, Asn-599, Asn-630, and Asn-676.

This sequence belongs to the BRINP family.

Its subcellular location is the cytoplasm. In terms of biological role, plays a role in neurogenesis and brain development. May suppress cell cycle progression in postmitotic neurons by inhibiting G1/S transition. The sequence is that of BMP/retinoic acid-inducible neural-specific protein 1 (Brinp1) from Rattus norvegicus (Rat).